The chain runs to 707 residues: Protein MICRORCHIDIA 7 (707 aa).

Composition is skewed to basic and acidic residues over residues 1-11 and 575-587; these read MDNSIHVKREI and DNRD…DREG. 2 disordered regions span residues 1–22 and 568–619; these read MDNS…AGFP and EKSA…SGKD. Residues 590-613 show a composition bias toward polar residues; sequence SIKTPTPASDKFYSSSYPNHNGDN. A coiled-coil region spans residues 620-701; the sequence is GARLQEELRR…NKIKKMEGSK (82 aa). The Nuclear localization signal motif lies at 633–640; sequence RRKALEVE.

This sequence belongs to the MORC ATPase protein family. Homodimer and heterodimer. Component of an RNA-directed DNA methylation (RdDM) complex. Forms homomeric complexes. Mg(2+) serves as cofactor. Requires Mn(2+) as cofactor.

The protein localises to the nucleus. Exhibits ATPase activity. Binds DNA/RNA in a non-specific manner and exhibits endonuclease activity. Probably involved in DNA repair. Involved in RNA-directed DNA methylation (RdDM) as a component of the RdDM machinery and required for gene silencing. May also be involved in the regulation of chromatin architecture to maintain gene silencing. Together with MORC4, acts to suppress a wide set of non-methylated protein-coding genes, especially involved in pathogen response. Positive regulators of defense against the oomycete Hyaloperonospora arabidopsidis (Hpa). The polypeptide is Protein MICRORCHIDIA 7 (Arabidopsis thaliana (Mouse-ear cress)).